The primary structure comprises 528 residues: MSTVNVQIGLHELLNGSNAQIQLSVPQLVEKVLMRDEGKLTSTGAVSASTGKYTGRSPKDKFIVKEASVADKIAWGAVNQPISEEHFNKLYTKVLEYLKEKEELFVFKGFAGADRNYRLPIQVINEYAWHNLFVHQLFIRPTEEELTTHESEFTIVSAPNFKADPAVDGTNSEAFIMVSFEKRIVLIGGTEYAGEMKKSIFSIMNFLLPEQDILSMHCSANVGEEGDVALFFGLSGTGKTTLSADPNRKLIGDDEHGWSDNGVFNIEGGCYAKCVNLSHEKEPQIFDAITFGSVLENVIINDQTRIADYNDTTLTENTRAAYPMHAIDNIVLPSVAGHPNTIIFLTADASGVLPPISKLSKEQAMYHFLSGYTSKLAGTERGVTSPQATFSTCFGSPFLPLDASRYAEMLGEKIEKHDAKVFLVNTGWTGGEYGVGKRMNLGYTRAMIQAALNGELAKTETAKHDIFGLEVPLHVPGVPDEVLMPEQTWADKAAYKAKAIELANEFKANFKKFDSVSEDIINLGGPIA.

Substrate is bound by residues arginine 56, tyrosine 192, and lysine 198. Residues lysine 198, histidine 217, and 233–241 contribute to the ATP site; that span reads GLSGTGKTT. Residues lysine 198 and histidine 217 each contribute to the Mn(2+) site. Position 254 (aspartate 254) interacts with Mn(2+). Positions 282, 319, and 444 each coordinate ATP. Arginine 319 contributes to the substrate binding site.

The protein belongs to the phosphoenolpyruvate carboxykinase (ATP) family. Mn(2+) is required as a cofactor.

The protein localises to the cytoplasm. It carries out the reaction oxaloacetate + ATP = phosphoenolpyruvate + ADP + CO2. It participates in carbohydrate biosynthesis; gluconeogenesis. Its function is as follows. Involved in the gluconeogenesis. Catalyzes the conversion of oxaloacetate (OAA) to phosphoenolpyruvate (PEP) through direct phosphoryl transfer between the nucleoside triphosphate and OAA. The sequence is that of Phosphoenolpyruvate carboxykinase (ATP) from Bacillus cereus (strain ATCC 10987 / NRS 248).